The sequence spans 592 residues: MRFFKRFLLTLTVFIYTLRYLHCNADYALDESNCTCLRNFCQYSNANYWNDYLIEHNEYYKTVINPVATENYNLYIKPYCLIAREKSNLYYKLYLEEHVNNTLNNKYVARVAEEFLVFKESHCHYWKNHSVKYHDWIKLLHEKTENYIKNIKVKFNSLHDNLKGQFDEMKQDIHKNVKTLTSTLYTSTSTEETLVPSPASHSIDTKVEEVSGSHLIDNKKTDNTADEIQTTPELSEWELAQDEFNAWFKLVDTKSSKACKFLDQEVEDYLNEKIEPWELELNEKINHFRKEIHLQFNKLVKNIEDIDCTSEVDGETGEVIYFAKNGETQLSQYITRPFISSLFKEIESKFQALENNISTNLTNTIDELDKNIQEIHEHHVELYEEWGDIMISEWSKRMAYIEVVAAHYDSESDEDSSQEYWRNFLKLKKKVISIRDNLVEHHIKVTPLNQFLANVQNELNNITKESNEYLLVLRAKANLLFDEREKREEEEHNQKIILQRMENERIQSEQEERIKSLQKEEEEAEKLLEKEIQEKARKQEEARKQEEARKQEEARKQEEARKQEEARKQEEVRKQEEARKQMGSPPPPQQQQ.

The first 23 residues, 1–23 (MRFFKRFLLTLTVFIYTLRYLHC), serve as a signal peptide directing secretion. 2 coiled-coil regions span residues 354–385 (ENNISTNLTNTIDELDKNIQEIHEHHVELYEE) and 448–583 (LNQF…KQMG). The segment covering 507-580 (QSEQEERIKS…EVRKQEEARK (74 aa)) has biased composition (basic and acidic residues). Positions 507–592 (QSEQEERIKS…GSPPPPQQQQ (86 aa)) are disordered.

Belongs to the SHE10 family. In terms of assembly, component of the mitochondria-localized RNase mitochondrial RNA-processing (RNase MRP) composed of one single RNA encoded by the NME1 gene and at least 31 proteins. Absent in the nucleus-localized RNase MRP (NuMRP).

It is found in the mitochondrion. Involved in spore wall assembly. May be a component of the mitochondrial RNase MRP (MtMRP), a ribonucleoprotein endoribonuclease involved in the cleaving RNA transcripts to generate primers for DNA replication in mitochondria. In Vanderwaltozyma polyspora (strain ATCC 22028 / DSM 70294 / BCRC 21397 / CBS 2163 / NBRC 10782 / NRRL Y-8283 / UCD 57-17) (Kluyveromyces polysporus), this protein is Outer spore wall assembly protein SHE10.